We begin with the raw amino-acid sequence, 368 residues long: Probable dual-specificity RNA methyltransferase RlmN (368 aa).

Residue E111 is the Proton acceptor of the active site. A Radical SAM core domain is found at 117 to 355 (YPNRATLCIS…CTVRDTRGQE (239 aa)). Cysteines 124 and 360 form a disulfide. Residues C131, C135, and C138 each coordinate [4Fe-4S] cluster. S-adenosyl-L-methionine is bound by residues 181 to 182 (GE), S215, 238 to 240 (SLH), and N317. C360 functions as the S-methylcysteine intermediate in the catalytic mechanism.

This sequence belongs to the radical SAM superfamily. RlmN family. It depends on [4Fe-4S] cluster as a cofactor.

It is found in the cytoplasm. The enzyme catalyses adenosine(2503) in 23S rRNA + 2 reduced [2Fe-2S]-[ferredoxin] + 2 S-adenosyl-L-methionine = 2-methyladenosine(2503) in 23S rRNA + 5'-deoxyadenosine + L-methionine + 2 oxidized [2Fe-2S]-[ferredoxin] + S-adenosyl-L-homocysteine. It catalyses the reaction adenosine(37) in tRNA + 2 reduced [2Fe-2S]-[ferredoxin] + 2 S-adenosyl-L-methionine = 2-methyladenosine(37) in tRNA + 5'-deoxyadenosine + L-methionine + 2 oxidized [2Fe-2S]-[ferredoxin] + S-adenosyl-L-homocysteine. In terms of biological role, specifically methylates position 2 of adenine 2503 in 23S rRNA and position 2 of adenine 37 in tRNAs. This chain is Probable dual-specificity RNA methyltransferase RlmN, found in Corynebacterium diphtheriae (strain ATCC 700971 / NCTC 13129 / Biotype gravis).